The following is a 524-amino-acid chain: MSDKEAGVASSLGSNSPINKDEVDVKNTEEHSKQESKSDINKPPLKKIKADDGIDISDSFSRRENKGNNKVISSVYNDENKKTPAWMKSKTTDKYDKYGSRSTPIATPTAPVNNPDERYSKYMTNSVNSNDRVRRPPTETTSSQYDKKRAHDEAEDDVVAPYSNLAVANPSSNLYQTFQSHINNREGKDINSIVRSHYNQRTQQSKFQGSRTKSPIYKLRNFNNAIKYILLGNWVKPNPDSNRPTVILDLCCGKGGDLNKCEFVSVDQYIGIDISDASIKEAFSRYSRNKARFIPQTAESKKERDTRRYNFEACFATGDCFSSSIPEILEPNFPGIIDGLFPVDCVSLQFAMHYAFETEEKVHQLLTNVTKSLRAGGTLIGTIPSSDFIRDKIVNRAFIDQENRKFGNDLYSVTFHKDPPDEGVFRPPFGNGYNYSLKDAIDDVPEYVVPFEVFRGLCEEYGLVLKYKKNFIDIFNQEIPKYFSKLNKNLIEGMKRSDGKYGAEGLEKEAVGFYIGFVFEKLGN.

A disordered region spans residues 1 to 155; sequence MSDKEAGVAS…DKKRAHDEAE (155 aa). The segment covering 19-40 has biased composition (basic and acidic residues); it reads NKDEVDVKNTEEHSKQESKSDI. Residues 68–77 are compositionally biased toward polar residues; it reads NNKVISSVYN. The span at 90-99 shows a compositional bias: basic and acidic residues; sequence KTTDKYDKYG. A compositionally biased stretch (polar residues) spans 100 to 112; it reads SRSTPIATPTAPV. Residues 214–522 enclose the mRNA cap 0 methyltransferase domain; sequence SPIYKLRNFN…FYIGFVFEKL (309 aa). Residue 223 to 224 participates in mRNA binding; the sequence is NN. S-adenosyl-L-methionine contacts are provided by Lys-227, Cys-251, Asp-273, Asp-319, Gln-349, and Tyr-354.

This sequence belongs to the class I-like SAM-binding methyltransferase superfamily. mRNA cap 0 methyltransferase family.

The protein localises to the nucleus. It catalyses the reaction a 5'-end (5'-triphosphoguanosine)-ribonucleoside in mRNA + S-adenosyl-L-methionine = a 5'-end (N(7)-methyl 5'-triphosphoguanosine)-ribonucleoside in mRNA + S-adenosyl-L-homocysteine. Responsible for methylating the 5'-cap structure of mRNAs. The chain is mRNA cap guanine-N(7) methyltransferase (ABD1) from Debaryomyces hansenii (strain ATCC 36239 / CBS 767 / BCRC 21394 / JCM 1990 / NBRC 0083 / IGC 2968) (Yeast).